The following is a 250-amino-acid chain: MAEAGASKGGEEPGRLPEHEEEEESPLWHGAGHCKWFNVRMGFGFISMSSREGSPLESPVDVFVHQSKLYMEGFRSLKEGEPVEFTYKKSSKGLESIRVTGPGGSPCLGSERRPKGKTVQKRKPKGDRCYNCGGLDHHAKECSLPPQPKKCHYCQSIMHMVANCPHKTVSQQPTSSQGRHEAEPQPSTSAFLREGGGTYGYSSPSYSQEGRSEISERSGRSPQEASSSKLSASPEEPSRKGPSVQKRKKT.

2 disordered regions span residues 1–27 and 98–126; these read MAEA…ESPL and RVTG…KPKG. Residues 9–18 are compositionally biased toward basic and acidic residues; that stretch reads GGEEPGRLPE. Positions 29 to 102 constitute a CSD domain; the sequence is HGAGHCKWFN…GLESIRVTGP (74 aa). The span at 114-125 shows a compositional bias: basic residues; it reads PKGKTVQKRKPK. 2 consecutive CCHC-type zinc fingers follow at residues 127–144 and 149–166; these read DRCY…ECSL and KKCH…NCPH. Zn(2+) contacts are provided by cysteine 129, cysteine 132, histidine 137, cysteine 142, cysteine 151, cysteine 154, histidine 159, and cysteine 164. Residues 165-250 are disordered; sequence PHKTVSQQPT…GPSVQKRKKT (86 aa). Polar residues predominate over residues 168–177; sequence TVSQQPTSSQ. Residues 200-209 show a composition bias toward low complexity; the sequence is GYSSPSYSQE. The segment covering 210–219 has biased composition (basic and acidic residues); sequence GRSEISERSG.

The protein belongs to the lin-28 family.

The protein localises to the nucleus. It is found in the nucleolus. In terms of biological role, suppressor of specific microRNA (miRNA) biogenesis. Binds target primary miRNA transcripts and sequester them in the nucleolus, away from the microprocessor complex, hence preventing their processing into mature miRNA. The specific interaction with target pri-miRNAs occurs via an 5'-GGAG-3' motif in the pre-miRNA terminal loop. The polypeptide is Protein lin-28 homolog B (LIN28B) (Gallus gallus (Chicken)).